The primary structure comprises 606 residues: Acetylcholinesterase (606 aa).

Positions 1 to 28 (MPSCQPGKMPAPWPWWLQLLLCIPSCVA) are cleaved as a signal peptide. Residues Cys98 and Cys125 are joined by a disulfide bond. Catalysis depends on Ser231, which acts as the Acyl-ester intermediate. Cysteines 285 and 296 form a disulfide. An N-linked (GlcNAc...) asparagine glycan is attached at Asn289. Residue Glu358 is the Charge relay system of the active site. The N-linked (GlcNAc...) asparagine glycan is linked to Asn374. Cysteines 433 and 552 form a disulfide. The active-site Charge relay system is His471. The N-linked (GlcNAc...) asparagine glycan is linked to Asn484.

This sequence belongs to the type-B carboxylesterase/lipase family. As to quaternary structure, isoform S is monomeric. Isoform T can form oligomers, including collagen-tailed forms. In terms of processing, the N-terminus is blocked. In terms of tissue distribution, liver and muscle contain both isoform T and isoform S. Venom gland predominantly contains isoform S.

It localises to the synapse. The protein resides in the secreted. Its subcellular location is the cell membrane. It carries out the reaction acetylcholine + H2O = choline + acetate + H(+). Inhibited by active site inhibitors: edrophonium, trimethyl-(m-acetamidopheny1)-ammonium iodide, and trimethyl-(p-acetarnidopheny1)-ammonium iodide. Inhibited by both active and peripheral site inhibitors: decamethonium, and BW284c51. Inhibited by peripheral site inhibitors: snake acetylcholinesterase fasciculin-2, propidium, gallamine, D-tubocurarine, and tacrine. Also inhibited by antibodies Elec410 and Fab410. Functionally, in muscle, it terminates signal transduction at the neuromuscular junction by rapid hydrolysis of the acetylcholine released into the synaptic cleft. In liver, its function is unclear: it could serve as a safeguard against any diffusion of acetylcholine from synapses into the circulation. In venom, its toxic role is unclear: it could result in less musculatory control by rapidly hydrolyzing acetylcholine, or that it works synergistically with alkaline phosphatase (ALP) in paralyzing prey through hypotension. The chain is Acetylcholinesterase (ACHE) from Bungarus fasciatus (Banded krait).